Here is a 40-residue protein sequence, read N- to C-terminus: MTCGIENSYKSAEKKKKYRSFRFFESRDYSELCIIVGTYY.

This is an uncharacterized protein from Saccharomyces cerevisiae (strain ATCC 204508 / S288c) (Baker's yeast).